Here is a 266-residue protein sequence, read N- to C-terminus: Glucagon-1 (266 aa).

The signal sequence occupies residues 1-20; it reads MKSTCYMIGILLMILQNTYQ. 6 propeptides span residues 21–50, 84–95, 136–140, 175–178, 213–224, and 261–266; these read SPVP…LKEV, SGELSRRNADYE, NAEFE, IRYS, NFSEVHSVEEMD, and DLLEEQ. Residues 23 to 32 are compositionally biased toward polar residues; sequence VPETDANSRS. The segment at 23 to 44 is disordered; the sequence is VPETDANSRSVKAARNEAVDDS.

It belongs to the glucagon family.

Its subcellular location is the secreted. In terms of biological role, promotes hydrolysis of glycogen and lipids, and raises the blood sugar level. This is Glucagon-1 (gcg1) from Xenopus laevis (African clawed frog).